The primary structure comprises 372 residues: Glutamate 5-kinase (372 aa).

Residue Lys14 participates in ATP binding. Substrate is bound by residues Ser54, Asp141, and Asn153. 173-174 (TD) lines the ATP pocket. The PUA domain occupies 280 to 358 (RGHVVIDAGA…GEIESVLGYM (79 aa)).

The protein belongs to the glutamate 5-kinase family.

It is found in the cytoplasm. It carries out the reaction L-glutamate + ATP = L-glutamyl 5-phosphate + ADP. It participates in amino-acid biosynthesis; L-proline biosynthesis; L-glutamate 5-semialdehyde from L-glutamate: step 1/2. Functionally, catalyzes the transfer of a phosphate group to glutamate to form L-glutamate 5-phosphate. The chain is Glutamate 5-kinase from Burkholderia multivorans (strain ATCC 17616 / 249).